The sequence spans 61 residues: RICYNHLGTKPPTTECTQEDSCYKNIWRNITFDNIRRGCGCFTPRGDMPGPYCCESDKCNL.

4 cysteine pairs are disulfide-bonded: Cys-3–Cys-22, Cys-16–Cys-39, Cys-41–Cys-53, and Cys-54–Cys-59. The Cell attachment site motif lies at 45-47 (RGD).

The protein belongs to the three-finger toxin family. Short-chain subfamily. Antiplatelet toxin sub-subfamily. As to expression, expressed by the venom gland.

Its subcellular location is the secreted. Inhibits ADP-induced platelet aggregation and inhibits the binding of purified platelet fibrinogen receptor alpha-IIb/beta-3 (ITGA2B/ITGB3) to immobilized fibrinogen. The chain is Toxin S5C1 from Dendroaspis jamesoni kaimosae (Eastern Jameson's mamba).